Here is a 171-residue protein sequence, read N- to C-terminus: Calcium-binding protein F-like (171 aa).

EF-hand domains lie at Lys-6–Gly-41, Ile-57–Lys-80, Ala-89–Thr-124, and Asp-130–Asp-159. Residues Asp-19, Asn-21, Asp-23, Ser-25, and Asp-30 each contribute to the Ca(2+) site. Ca(2+) contacts are provided by Asp-102, Asp-104, Asp-106, Lys-108, Glu-113, Asp-137, Asp-139, Asp-141, Cys-143, and Glu-148.

The protein is Calcium-binding protein F-like (cbp12) of Dictyostelium discoideum (Social amoeba).